Here is a 341-residue protein sequence, read N- to C-terminus: Cell wall mannoprotein PIR1 (341 aa).

Residues 1-18 (MQYKKSLVASALVATSLA) form the signal peptide. Residues 19–63 (AYAPKDPWSTLTPSATYKGGITDYSSTFGIAVEPIATTASSKAKR) constitute a propeptide that is removed on maturation. 8 PIR1/2/3 repeats span residues 64–82 (AAAI…TKTT), 83–101 (AAAV…TKTK), 102–120 (AAAV…TKTT), 126–144 (AAAV…TKTK), 145–163 (AAAV…TKTT), 164–182 (AAAV…TKTT), 183–201 (AAAV…TNTT), and 202–220 (VAPV…TLTS).

The protein belongs to the PIR protein family. Post-translationally, covalently linked to beta-1,3-glucan of the inner cell wall layer via an alkali-sensitive ester linkage between the gamma-carboxyl group of glutamic acids, arising from specific glutamines within the PIR1/2/3 repeats, and hydroxyl groups of glucoses of beta-1,3-glucan chains. O-glycosylated. Extensively O-mannosylated.

The protein resides in the secreted. It is found in the cell wall. Component of the outer cell wall layer. Required for stability of the cell wall and for optimal growth. Required for resistance against several antifungal and cell wall-perturbing agents and for tolerance to heat shock. This is Cell wall mannoprotein PIR1 (PIR1) from Saccharomyces cerevisiae (strain YJM789) (Baker's yeast).